The primary structure comprises 714 residues: Structure-specific endonuclease subunit SLX4 1 (714 aa).

Composition is skewed to basic and acidic residues over residues 1–14 (MSPE…EDNL) and 24–34 (IHEETLAEESH). Disordered stretches follow at residues 1–116 (MSPE…QGSI) and 337–369 (DSSG…KTPQ). The segment covering 36-46 (QSIQRSISRLS) has biased composition (low complexity). The segment covering 79–92 (KTKKRKLKVSKPRK) has biased composition (basic residues).

This sequence belongs to the SLX4 family. As to quaternary structure, forms a heterodimer with SLX1. Phosphorylated in response to DNA damage.

Its subcellular location is the nucleus. In terms of biological role, regulatory subunit of the SLX1-SLX4 structure-specific endonuclease that resolves DNA secondary structures generated during DNA repair and recombination. Has endonuclease activity towards branched DNA substrates, introducing single-strand cuts in duplex DNA close to junctions with ss-DNA. The chain is Structure-specific endonuclease subunit SLX4 1 from Candida tropicalis (strain ATCC MYA-3404 / T1) (Yeast).